The sequence spans 218 residues: Cell division protein SepF (218 aa).

Positions 20-81 are disordered; it reads DDEYYDDRAP…GYRGGYADEP (62 aa). The span at 36 to 65 shows a compositional bias: basic and acidic residues; it reads PRFDDDYGRYDGRDYDDARSDSRGDLRGEP.

This sequence belongs to the SepF family. In terms of assembly, homodimer. Interacts with FtsZ.

Its subcellular location is the cytoplasm. Its function is as follows. Cell division protein that is part of the divisome complex and is recruited early to the Z-ring. Probably stimulates Z-ring formation, perhaps through the cross-linking of FtsZ protofilaments. Its function overlaps with FtsA. In Mycobacterium bovis (strain ATCC BAA-935 / AF2122/97), this protein is Cell division protein SepF.